The primary structure comprises 118 residues: Large ribosomal subunit protein bL19 (118 aa).

The protein belongs to the bacterial ribosomal protein bL19 family.

Its function is as follows. This protein is located at the 30S-50S ribosomal subunit interface and may play a role in the structure and function of the aminoacyl-tRNA binding site. In Helicobacter acinonychis (strain Sheeba), this protein is Large ribosomal subunit protein bL19.